We begin with the raw amino-acid sequence, 368 residues long: 1-deoxy-D-xylulose 5-phosphate reductoisomerase (368 aa).

Residues threonine 7, glycine 8, serine 9, isoleucine 10, glycine 31, lysine 32, asparagine 33, and asparagine 113 each coordinate NADPH. Lysine 114 serves as a coordination point for 1-deoxy-D-xylulose 5-phosphate. Position 115 (glutamate 115) interacts with NADPH. Aspartate 133 is a Mn(2+) binding site. 1-deoxy-D-xylulose 5-phosphate-binding residues include serine 134, glutamate 135, serine 158, and histidine 181. A Mn(2+)-binding site is contributed by glutamate 135. NADPH is bound at residue glycine 187. 1-deoxy-D-xylulose 5-phosphate-binding residues include serine 194, asparagine 199, lysine 200, and glutamate 203. Residue glutamate 203 coordinates Mn(2+).

It belongs to the DXR family. Mg(2+) is required as a cofactor. The cofactor is Mn(2+).

The enzyme catalyses 2-C-methyl-D-erythritol 4-phosphate + NADP(+) = 1-deoxy-D-xylulose 5-phosphate + NADPH + H(+). The protein operates within isoprenoid biosynthesis; isopentenyl diphosphate biosynthesis via DXP pathway; isopentenyl diphosphate from 1-deoxy-D-xylulose 5-phosphate: step 1/6. Functionally, catalyzes the NADPH-dependent rearrangement and reduction of 1-deoxy-D-xylulose-5-phosphate (DXP) to 2-C-methyl-D-erythritol 4-phosphate (MEP). This Helicobacter pylori (strain P12) protein is 1-deoxy-D-xylulose 5-phosphate reductoisomerase.